Here is a 396-residue protein sequence, read N- to C-terminus: Ornithine aminotransferase 2 (396 aa).

Lys255 carries the post-translational modification N6-(pyridoxal phosphate)lysine.

This sequence belongs to the class-III pyridoxal-phosphate-dependent aminotransferase family. OAT subfamily. The cofactor is pyridoxal 5'-phosphate.

The protein localises to the cytoplasm. The enzyme catalyses a 2-oxocarboxylate + L-ornithine = L-glutamate 5-semialdehyde + an L-alpha-amino acid. The protein operates within amino-acid biosynthesis; L-proline biosynthesis; L-glutamate 5-semialdehyde from L-ornithine: step 1/1. Catalyzes the interconversion of ornithine to glutamate semialdehyde. The sequence is that of Ornithine aminotransferase 2 from Staphylococcus aureus (strain COL).